The chain runs to 360 residues: Mannonate dehydratase (360 aa).

This sequence belongs to the mannonate dehydratase family. It depends on Fe(2+) as a cofactor. Mn(2+) serves as cofactor.

The catalysed reaction is D-mannonate = 2-dehydro-3-deoxy-D-gluconate + H2O. It functions in the pathway carbohydrate metabolism; pentose and glucuronate interconversion. Functionally, catalyzes the dehydration of D-mannonate. The protein is Mannonate dehydratase (uxuA) of Thermotoga neapolitana.